The sequence spans 508 residues: MGLPWYRVHTVVLNDPGRLLSVHIMHTALVAGWAGSMALYELAVFDPSDPVLDPMWRQGMFVIPFMTRLGITNSWGGWNITGGTITNPGLWSYEGVAGAHIVFSGLCFLAAIWHWVYWDLEIFCDERTGKPSLDLPKIFGIHLFLSGVACFGFGAFHVTGLYGPGIWVSDPYGLTGKVQPVNPAWGVEGFDPFVPGGIASHHIAAGTLGILAGLFHLSVRPPQRLYKGLRMGNIETVLSSSIAAVFFAAFVVAGTMWYGSATTPIELFGPTRYQWDQGYFQQEIYRRVSAGLAENQSLSEAWSKIPEKLAFYDYIGNNPAKGGLFRAGSMDNGDGIAVGWLGHPVFRNKEGRELFVRRMPTFFETFPVVLVDGDGIVRADVPFRRAESKYSVEQVGVTVEFYGGELNGVSYSDPATVKKYARRAQLGEIFELDRATLKSDGVFRSSPRGWFTFGHASFALLFFFGHIWHGARTLFRDVFAGIDPDLDAQVEFGAFQKLGDPTTKRQAV.

Transmembrane regions (helical) follow at residues 21–36 (SVHI…WAGS), 101–115 (IVFS…IWHW), 140–156 (GIHL…FGAF), 203–218 (IAAG…FHLS), 237–252 (VLSS…AFVV), and 457–472 (SFAL…HGAR).

It belongs to the PsbB/PsbC family. PsbB subfamily. In terms of assembly, PSII is composed of 1 copy each of membrane proteins PsbA, PsbB, PsbC, PsbD, PsbE, PsbF, PsbH, PsbI, PsbJ, PsbK, PsbL, PsbM, PsbT, PsbX, PsbY, PsbZ, Psb30/Ycf12, at least 3 peripheral proteins of the oxygen-evolving complex and a large number of cofactors. It forms dimeric complexes. It depends on Binds multiple chlorophylls. PSII binds additional chlorophylls, carotenoids and specific lipids. as a cofactor.

It is found in the plastid. The protein localises to the chloroplast thylakoid membrane. In terms of biological role, one of the components of the core complex of photosystem II (PSII). It binds chlorophyll and helps catalyze the primary light-induced photochemical processes of PSII. PSII is a light-driven water:plastoquinone oxidoreductase, using light energy to abstract electrons from H(2)O, generating O(2) and a proton gradient subsequently used for ATP formation. The chain is Photosystem II CP47 reaction center protein from Barbarea verna (Land cress).